A 353-amino-acid polypeptide reads, in one-letter code: Uroporphyrinogen decarboxylase (353 aa).

Substrate-binding positions include 25-29 (RQAGR), aspartate 74, tyrosine 151, serine 206, and histidine 325.

The protein belongs to the uroporphyrinogen decarboxylase family. In terms of assembly, homodimer.

Its subcellular location is the cytoplasm. The catalysed reaction is uroporphyrinogen III + 4 H(+) = coproporphyrinogen III + 4 CO2. It participates in porphyrin-containing compound metabolism; protoporphyrin-IX biosynthesis; coproporphyrinogen-III from 5-aminolevulinate: step 4/4. Functionally, catalyzes the decarboxylation of four acetate groups of uroporphyrinogen-III to yield coproporphyrinogen-III. The sequence is that of Uroporphyrinogen decarboxylase from Chloroherpeton thalassium (strain ATCC 35110 / GB-78).